The sequence spans 303 residues: Nucleotide-binding protein USA300HOU_0794 (303 aa).

Residue 18–25 (GLSGAGKS) participates in ATP binding. 69–72 (DLRG) is a binding site for GTP.

The protein belongs to the RapZ-like family.

Displays ATPase and GTPase activities. The chain is Nucleotide-binding protein USA300HOU_0794 from Staphylococcus aureus (strain USA300 / TCH1516).